A 607-amino-acid chain; its full sequence is Pogo transposable element with KRAB domain (607 aa).

Residues 8–29 (LNLTLKEEQKEEEVEIQELEDG) adopt a coiled-coil conformation. Lys13 is covalently cross-linked (Glycyl lysine isopeptide (Lys-Gly) (interchain with G-Cter in SUMO2)). Positions 47-118 (ALFDEVAIYF…DEWRLQGVTF (72 aa)) constitute a KRAB domain. The 74-residue stretch at 250 to 323 (AFRGPKNGRF…MRRYDLSLRH (74 aa)) folds into the HTH CENPB-type domain. The region spanning 355–567 (YEVAQMGNAD…ISSESIVQGF (213 aa)) is the DDE-1 domain. Residue Lys384 forms a Glycyl lysine isopeptide (Lys-Gly) (interchain with G-Cter in SUMO2) linkage. Positions 588-607 (GELPKEPPKECGPESVAEGD) are disordered. Positions 589 to 599 (ELPKEPPKECG) are enriched in basic and acidic residues.

Its subcellular location is the nucleus. This chain is Pogo transposable element with KRAB domain (Pogk), found in Mus musculus (Mouse).